The sequence spans 87 residues: UPF0250 protein YbeD (87 aa).

This sequence belongs to the UPF0250 family.

The sequence is that of UPF0250 protein YbeD from Shigella boydii serotype 18 (strain CDC 3083-94 / BS512).